The sequence spans 931 residues: Isoleucine--tRNA ligase (931 aa).

The short motif at 58-68 is the 'HIGH' region element; that stretch reads PYANGHLHCGH. L-isoleucyl-5'-AMP is bound at residue Glu-559. The 'KMSKS' region motif lies at 600–604; the sequence is KLSKS. Residue Lys-603 participates in ATP binding. 4 residues coordinate Zn(2+): Cys-894, Cys-897, Cys-914, and Cys-917.

The protein belongs to the class-I aminoacyl-tRNA synthetase family. IleS type 1 subfamily. Monomer. The cofactor is Zn(2+).

The protein resides in the cytoplasm. It carries out the reaction tRNA(Ile) + L-isoleucine + ATP = L-isoleucyl-tRNA(Ile) + AMP + diphosphate. Functionally, catalyzes the attachment of isoleucine to tRNA(Ile). As IleRS can inadvertently accommodate and process structurally similar amino acids such as valine, to avoid such errors it has two additional distinct tRNA(Ile)-dependent editing activities. One activity is designated as 'pretransfer' editing and involves the hydrolysis of activated Val-AMP. The other activity is designated 'posttransfer' editing and involves deacylation of mischarged Val-tRNA(Ile). The polypeptide is Isoleucine--tRNA ligase (Legionella pneumophila (strain Paris)).